A 279-amino-acid polypeptide reads, in one-letter code: Probable endonuclease 4 (279 aa).

Positions 69, 109, 145, 179, 182, 216, 229, 231, and 261 each coordinate Zn(2+).

Belongs to the AP endonuclease 2 family. Requires Zn(2+) as cofactor.

The enzyme catalyses Endonucleolytic cleavage to 5'-phosphooligonucleotide end-products.. Its function is as follows. Endonuclease IV plays a role in DNA repair. It cleaves phosphodiester bonds at apurinic or apyrimidinic (AP) sites, generating a 3'-hydroxyl group and a 5'-terminal sugar phosphate. The protein is Probable endonuclease 4 of Tolumonas auensis (strain DSM 9187 / NBRC 110442 / TA 4).